Here is a 457-residue protein sequence, read N- to C-terminus: Multidrug resistance protein MdtK (457 aa).

Residues 1–10 (MQKYISEARL) are Cytoplasmic-facing. The helical transmembrane segment at 11–31 (LLALAIPVILAQIAQTAMGFV) threads the bilayer. Residues 32–52 (DTVMAGGYSATDMAAVAIGTS) lie on the Periplasmic side of the membrane. The helical transmembrane segment at 53 to 73 (IWLPAILFGHGLLLALTPVIA) threads the bilayer. Residues 74 to 92 (QLNGSGRRERIAHQVRQGF) lie on the Cytoplasmic side of the membrane. Residues 93-113 (WLAGFVSVLIMLVLWNAGYII) form a helical membrane-spanning segment. The Periplasmic segment spans residues 114-126 (RYMENIDPALADK). Residues 127-147 (AVGYLRALLWGAPGYLFFQVA) form a helical membrane-spanning segment. Topologically, residues 148 to 159 (RNQCEGLAKAKP) are cytoplasmic. Residues 160 to 180 (GMVMGFIGLLVNIPVNYIFIY) traverse the membrane as a helical segment. Topologically, residues 181 to 188 (GHFGMPEL) are periplasmic. Residues 189 to 209 (GGVGCGVATAAVYWVMFLAMV) form a helical membrane-spanning segment. At 210–242 (SYIKRARSMRDIRNEKGTAKPEPAVMKRLIQLG) the chain is on the cytoplasmic side. Residues 243–263 (LPIALALFLEVTLFAVVALLV) form a helical membrane-spanning segment. At 264-275 (SPLGIVDVAGHQ) the chain is on the periplasmic side. The chain crosses the membrane as a helical span at residues 276–296 (IALNFSSLMFVLPMSLAAAVT). The Cytoplasmic segment spans residues 297–313 (IRVGYRLGQGSTLDAQT). The chain crosses the membrane as a helical span at residues 314–334 (AARTGLMVGVCMATLTAIFTV). The Periplasmic segment spans residues 335–349 (SLREQIALLYNDNPE). Residues 350–370 (VVTLAAHLMLLAAVYQISDSI) traverse the membrane as a helical segment. Residues 371 to 386 (QVIGSGILRGYKDTRS) are Cytoplasmic-facing. The chain crosses the membrane as a helical span at residues 387–407 (IFYITFTAYWVLGLPSGYILA). Over 408–417 (LTDLVVEPMG) the chain is Periplasmic. The chain crosses the membrane as a helical span at residues 418–438 (PAGFWIGFIIGLTSAAIMMML). The Cytoplasmic portion of the chain corresponds to 439–457 (RMRFLQRMPSAIILQRASR).

It belongs to the multi antimicrobial extrusion (MATE) (TC 2.A.66.1) family. MdtK subfamily.

The protein localises to the cell inner membrane. In terms of biological role, multidrug efflux pump that functions probably as a Na(+)/drug antiporter. The polypeptide is Multidrug resistance protein MdtK (Shigella flexneri serotype 5b (strain 8401)).